The chain runs to 169 residues: Cell division inhibitor SulA (169 aa).

The interval 106 to 112 is ftsZ binding; the sequence is ALRTGNY. Residues 162-169 are lon protease binding; sequence KIHSNLYH.

The protein belongs to the SulA family. Interacts with FtsZ. Post-translationally, is rapidly cleaved and degraded by the Lon protease once DNA damage is repaired.

Its function is as follows. Component of the SOS system and an inhibitor of cell division. Accumulation of SulA causes rapid cessation of cell division and the appearance of long, non-septate filaments. In the presence of GTP, binds a polymerization-competent form of FtsZ in a 1:1 ratio, thus inhibiting FtsZ polymerization and therefore preventing it from participating in the assembly of the Z ring. This mechanism prevents the premature segregation of damaged DNA to daughter cells during cell division. This is Cell division inhibitor SulA from Shigella flexneri serotype 5b (strain 8401).